The primary structure comprises 395 residues: Chalcone synthase 3 (395 aa).

Position 2 is an N-acetylvaline (Val2). Cys169 is an active-site residue.

The protein belongs to the thiolase-like superfamily. Chalcone/stilbene synthases family.

It catalyses the reaction (E)-4-coumaroyl-CoA + 3 malonyl-CoA + 3 H(+) = 2',4,4',6'-tetrahydroxychalcone + 3 CO2 + 4 CoA. It participates in secondary metabolite biosynthesis; flavonoid biosynthesis. In terms of biological role, the primary product of this enzyme is 4,2',4',6'-tetrahydroxychalcone (also termed naringenin-chalcone or chalcone) which can under specific conditions spontaneously isomerize into naringenin. The polypeptide is Chalcone synthase 3 (CHS3) (Sinapis alba (White mustard)).